Reading from the N-terminus, the 220-residue chain is Inner kinetochore subunit fta3 (220 aa).

This sequence belongs to the CENP-H/MCM16 family. Component of the inner kinetochore constitutive centromere-associated network (CCAN) (also known as central kinetochore Sim4 complex in fission yeast), which is composed of at least cnl2, cnp3, cnp20, fta1, fta2, fta3, fta4, fta6, fta7, mal2, mhf1, mhf2, mis6, mis15, mis17, sim4 and wip1.

The protein resides in the nucleus. Its subcellular location is the chromosome. It is found in the centromere. It localises to the kinetochore. In terms of biological role, component of the kinetochore, a multiprotein complex that assembles on centromeric DNA and attaches chromosomes to spindle microtubules, mediating chromosome segregation and sister chromatid segregation during meiosis and mitosis. Component of the inner kinetochore constitutive centromere-associated network (CCAN), which serves as a structural platform for outer kinetochore assembly. Fta2, fta3 and fta4 associate with the central core (cnt) and inner repeat (inr) region of the centromere. This chain is Inner kinetochore subunit fta3 (fta3), found in Schizosaccharomyces pombe (strain 972 / ATCC 24843) (Fission yeast).